A 189-amino-acid chain; its full sequence is Chitin synthase 2 (189 aa).

Belongs to the chitin synthase family. Class II subfamily.

The protein localises to the cell membrane. It catalyses the reaction [(1-&gt;4)-N-acetyl-beta-D-glucosaminyl](n) + UDP-N-acetyl-alpha-D-glucosamine = [(1-&gt;4)-N-acetyl-beta-D-glucosaminyl](n+1) + UDP + H(+). Polymerizes chitin, a structural polymer of the cell wall and septum, by transferring the sugar moiety of UDP-GlcNAc to the non-reducing end of the growing chitin polymer. The sequence is that of Chitin synthase 2 (CHS2) from Xylohypha bantiana.